The primary structure comprises 506 residues: ATP synthase subunit alpha, chloroplastic (506 aa).

ATP is bound at residue 170–177 (GDRQTGKT). At T257 the chain carries Phosphothreonine.

Belongs to the ATPase alpha/beta chains family. As to quaternary structure, F-type ATPases have 2 components, CF(1) - the catalytic core - and CF(0) - the membrane proton channel. CF(1) has five subunits: alpha(3), beta(3), gamma(1), delta(1), epsilon(1). CF(0) has four main subunits: a, b, b' and c.

It is found in the plastid. The protein localises to the chloroplast thylakoid membrane. The enzyme catalyses ATP + H2O + 4 H(+)(in) = ADP + phosphate + 5 H(+)(out). Its function is as follows. Produces ATP from ADP in the presence of a proton gradient across the membrane. The alpha chain is a regulatory subunit. The chain is ATP synthase subunit alpha, chloroplastic from Olimarabidopsis pumila (Dwarf rocket).